A 114-amino-acid chain; its full sequence is Amphinase-1 (114 aa).

Residue His-15 is the Proton acceptor of the active site. 4 disulfides stabilise this stretch: Cys-26–Cys-79, Cys-41–Cys-85, Cys-59–Cys-100, and Cys-97–Cys-114. N-linked (GlcNAc...) asparagine glycosylation occurs at Asn-27. 42-46 (KPVNT) provides a ligand contact to substrate. Residues Asn-67 and Asn-91 are each glycosylated (N-linked (GlcNAc...) asparagine). His-107 acts as the Proton donor in catalysis.

Belongs to the pancreatic ribonuclease family. As to quaternary structure, monomer. Post-translationally, there are at least five different forms arising from glycan heterogeneity.

The protein localises to the secreted. In terms of biological role, endonuclease, hydrolyzes highly polymerized RNA, poly(U) and poly(C), and the dinucleotides CpA and UpA. More active towards rCA than rUA or rUG. Has cytotoxic activity against cultured human submaxillary gland carcinoma cells. The polypeptide is Amphinase-1 (Lithobates pipiens (Northern leopard frog)).